We begin with the raw amino-acid sequence, 41 residues long: Antimicrobial protein PN-AMP1 (41 aa).

Residue Q1 is modified to Pyrrolidone carboxylic acid. The 41-residue stretch at Q1 to S41 folds into the Chitin-binding type-1 domain. Cystine bridges form between C3-C18, C12-C24, C17-C31, and C35-C39.

Chitin-binding protein with a defensive function against numerous chitin containing fungal pathogens. It is also an inhibitor of Gram-positive bacteria such as B.subtilis. The polypeptide is Antimicrobial protein PN-AMP1 (Ipomoea nil (Japanese morning glory)).